A 53-amino-acid chain; its full sequence is Cytochrome c oxidase subunit 7e (53 aa).

As to quaternary structure, slime mold cytochrome c oxidase consists of at least seven different polypeptides species, subunits I, II, III, IV, V, VI, and VIIe/s in order of MW.

The protein resides in the mitochondrion inner membrane. The catalysed reaction is 4 Fe(II)-[cytochrome c] + O2 + 8 H(+)(in) = 4 Fe(III)-[cytochrome c] + 2 H2O + 4 H(+)(out). This protein is one of the nuclear-coded polypeptide chains of cytochrome c oxidase, the terminal oxidase in mitochondrial electron transport. The chain is Cytochrome c oxidase subunit 7e (cxgE) from Dictyostelium discoideum (Social amoeba).